Here is a 235-residue protein sequence, read N- to C-terminus: tRNA (guanine-N(1)-)-methyltransferase (235 aa).

Residues glycine 114 and 134–139 (IGDYIL) each bind S-adenosyl-L-methionine.

The protein belongs to the RNA methyltransferase TrmD family. Homodimer.

The protein resides in the cytoplasm. It carries out the reaction guanosine(37) in tRNA + S-adenosyl-L-methionine = N(1)-methylguanosine(37) in tRNA + S-adenosyl-L-homocysteine + H(+). Its function is as follows. Specifically methylates guanosine-37 in various tRNAs. The sequence is that of tRNA (guanine-N(1)-)-methyltransferase from Ehrlichia ruminantium (strain Welgevonden).